The sequence spans 3799 residues: Polyketide synthase GfsE (3799 aa).

A Ketosynthase family 3 (KS3) 1 domain is found at His-33–Glu-459. Module stretches follow at residues His-33–Ala-1730 and Asp-1749–Leu-3494. Catalysis depends on for beta-ketoacyl synthase 1 activity residues Cys-206, His-341, and His-381. The interval Ala-462–Ser-496 is disordered. The Malonyl-CoA:ACP transacylase (MAT) 1 domain maps to Phe-582 to Asp-895. The interval His-944 to Glu-1069 is N-terminal hotdog fold 1. Positions His-944–Gly-1222 constitute a PKS/mFAS DH 1 domain. Residue His-976 is the Proton acceptor; for dehydratase activity 1 of the active site. Positions Ala-1081–Gly-1222 are C-terminal hotdog fold 1. Residue Asp-1142 is the Proton donor; for dehydratase activity 1 of the active site. The region spanning Leu-1382 to Glu-1554 is the Ketoreductase (KR) 1 domain. The region spanning Glu-1652–Ala-1730 is the Carrier 1 domain. O-(pantetheine 4'-phosphoryl)serine is present on Ser-1690. One can recognise a Ketosynthase family 3 (KS3) 2 domain in the interval Asp-1749–Gln-2174. Active-site for beta-ketoacyl synthase 2 activity residues include Cys-1921, His-2056, and His-2096. The region spanning Phe-2284–Gly-2604 is the Malonyl-CoA:ACP transacylase (MAT) 2 domain. The N-terminal hotdog fold 2 stretch occupies residues His-2656–Asp-2781. The PKS/mFAS DH 2 domain maps to His-2656–Ala-2936. His-2688 (proton acceptor; for dehydratase activity 2) is an active-site residue. The interval Ala-2794 to Ala-2936 is C-terminal hotdog fold 2. The active-site Proton donor; for dehydratase activity 2 is the Asp-2855. The region spanning Leu-3142–Glu-3314 is the Ketoreductase (KR) 2 domain. Residues Ala-3419–Leu-3494 form the Carrier 2 domain. Ser-3454 carries the O-(pantetheine 4'-phosphoryl)serine modification.

Requires pantetheine 4'-phosphate as cofactor.

The protein operates within antibiotic biosynthesis. Fifth protein in the synthesis of the 16-membered macrolide antibiotics FD-891 and FD-892. Composed of 2 modules. Modifies the product of GfsD by multiple rounds of addition of methylmalonyl-CoA and other modifications to help generate the final products. The chain is Polyketide synthase GfsE from Streptomyces halstedii.